We begin with the raw amino-acid sequence, 404 residues long: MSKLSIRDLDLAHKHVFMRVDFNVPLSEDGSEITDDTRIRETLPTIEYALRHKAKLILASHLGRPKGKVNPKYSLRPVVDRLRTLLDHDVTSRVNVAFSPDCVGDVAKELSLQLESGQVLLLENLRFHAEEEANDPEFARKLASLCEIYVNDAFGSAHRAHASTEGITHFVKQSAAGLLMEKELEYLGKALEAPAKPFVAIIGGAKVSDKIKVIDNLLNKVDALLIGGGMAYTFLKSQGQDVGKSLVEADKLDIAKAALDKAKEKGVRFLLPVDHILADKFAADAATQTFEGTGAFPAEWMALDIGPKSIELFTKEIAAADTIVWNGPMGVFEMPAFAKGTTAVAQAVADNVDAVSIIGGGDSVAAVKQAGVADKIKHISTGGGASLEFLEGKKLPGVEALTEK.

Residues 21-23, R38, 61-64, R126, and R159 each bind substrate; these read DFN and HLGR. Residues K210, E333, and 360 to 363 contribute to the ATP site; that span reads GGDS.

It belongs to the phosphoglycerate kinase family. As to quaternary structure, monomer.

The protein localises to the cytoplasm. The catalysed reaction is (2R)-3-phosphoglycerate + ATP = (2R)-3-phospho-glyceroyl phosphate + ADP. The protein operates within carbohydrate degradation; glycolysis; pyruvate from D-glyceraldehyde 3-phosphate: step 2/5. In Acidobacterium capsulatum (strain ATCC 51196 / DSM 11244 / BCRC 80197 / JCM 7670 / NBRC 15755 / NCIMB 13165 / 161), this protein is Phosphoglycerate kinase.